Here is a 286-residue protein sequence, read N- to C-terminus: Bifunctional protein FolD (286 aa).

Residues 165–167 (GRS), serine 190, and valine 231 contribute to the NADP(+) site.

This sequence belongs to the tetrahydrofolate dehydrogenase/cyclohydrolase family. In terms of assembly, homodimer.

The catalysed reaction is (6R)-5,10-methylene-5,6,7,8-tetrahydrofolate + NADP(+) = (6R)-5,10-methenyltetrahydrofolate + NADPH. It catalyses the reaction (6R)-5,10-methenyltetrahydrofolate + H2O = (6R)-10-formyltetrahydrofolate + H(+). The protein operates within one-carbon metabolism; tetrahydrofolate interconversion. Functionally, catalyzes the oxidation of 5,10-methylenetetrahydrofolate to 5,10-methenyltetrahydrofolate and then the hydrolysis of 5,10-methenyltetrahydrofolate to 10-formyltetrahydrofolate. The chain is Bifunctional protein FolD from Bacillus cereus (strain ATCC 10987 / NRS 248).